Here is a 183-residue protein sequence, read N- to C-terminus: UPF0316 protein EF_1609 (183 aa).

3 helical membrane passes run 1–21, 35–55, and 62–82; these read MVVD…YITL, VIAP…LSMV, and PLNL…GIKI.

The protein belongs to the UPF0316 family.

The protein localises to the cell membrane. This is UPF0316 protein EF_1609 from Enterococcus faecalis (strain ATCC 700802 / V583).